The sequence spans 320 residues: Foldase protein PrsA (320 aa).

The signal sequence occupies residues 1–20 (MKMINKLIVPVTASALLLGA). C21 is lipidated: N-palmitoyl cysteine. The S-diacylglycerol cysteine moiety is linked to residue C21. In terms of domain architecture, PpiC spans 139–245 (EDSKKASHIL…FGYHIIKADK (107 aa)). Positions 159-198 (EGLDDKEAKQKAEEIQKEVSKDPSKFGEIAKKESMDTGSA) are disordered.

It belongs to the PrsA family.

The protein resides in the cell membrane. The catalysed reaction is [protein]-peptidylproline (omega=180) = [protein]-peptidylproline (omega=0). Plays a major role in protein secretion by helping the post-translocational extracellular folding of several secreted proteins. The protein is Foldase protein PrsA of Staphylococcus aureus (strain bovine RF122 / ET3-1).